We begin with the raw amino-acid sequence, 262 residues long: Probable aminoglycoside 3'-phosphotransferase (262 aa).

The active-site Proton acceptor is Asp187.

The protein belongs to the aminoglycoside phosphotransferase family.

The enzyme catalyses kanamycin A + ATP = kanamycin 3'-phosphate + ADP + H(+). The polypeptide is Probable aminoglycoside 3'-phosphotransferase (ymdC) (Lactococcus lactis subsp. lactis (strain IL1403) (Streptococcus lactis)).